A 202-amino-acid chain; its full sequence is Peptide methionine sulfoxide reductase A1 (202 aa).

A disordered region spans residues 1-20 (MNILNKLGIGSSRQTNMDPS). Position 189 is a phosphoserine (Ser189).

The protein belongs to the MsrA Met sulfoxide reductase family.

It localises to the cytoplasm. The protein resides in the cytosol. The enzyme catalyses L-methionyl-[protein] + [thioredoxin]-disulfide + H2O = L-methionyl-(S)-S-oxide-[protein] + [thioredoxin]-dithiol. It catalyses the reaction [thioredoxin]-disulfide + L-methionine + H2O = L-methionine (S)-S-oxide + [thioredoxin]-dithiol. Functionally, catalyzes the reduction of methionine sulfoxide (MetSO) to methionine in proteins. Plays a protective role against oxidative stress by restoring activity to proteins that have been inactivated by methionine oxidation. MSRA family specifically reduces the MetSO S-enantiomer. The sequence is that of Peptide methionine sulfoxide reductase A1 (MSRA1) from Arabidopsis thaliana (Mouse-ear cress).